Here is a 399-residue protein sequence, read N- to C-terminus: MKVLVLNSGSSSLKYQFIDTETEVALCKGVVDRIGLPGAFIRHQKNGQEIIKEQEVKDHNVAIKLVLEMLTHPQMGIIKSMDEIDAIGHRVVHGGEYFSDAVIVNEEVKKAIRECIEFAPLHNPANLMGIEACEKEIPGKPNVAVFDTAFHQTMPKYAYMYSLPYEVYEKYKIRKYGFHGTSHKYVAIKAAEYLKRPLKELKLITCHLGNGSSVCAIKYGKSVDTSMGFTPLAGLAMGTRSGTIDPAVILYLMEKENMDVKQMNDLLNKKSGVLGISGVSSDFRDLEKAANEGNERAQLAIDMFCYRVKKYIGEYAAVLGGVDAIIFTAGIGENNPIVREKCVTDLEYMGVLYDKQKNFNAEKGKVFEINKPESKVKVLIVPTNEELMIARETKRLLEK.

Residue Asn-7 participates in Mg(2+) binding. Lys-14 contacts ATP. Residue Arg-90 coordinates substrate. Asp-147 functions as the Proton donor/acceptor in the catalytic mechanism. ATP contacts are provided by residues 207–211 (HLGNG), 282–284 (DFR), and 330–334 (GIGEN). Glu-385 provides a ligand contact to Mg(2+).

The protein belongs to the acetokinase family. Homodimer. It depends on Mg(2+) as a cofactor. Mn(2+) serves as cofactor.

The protein localises to the cytoplasm. The enzyme catalyses acetate + ATP = acetyl phosphate + ADP. Its pathway is metabolic intermediate biosynthesis; acetyl-CoA biosynthesis; acetyl-CoA from acetate: step 1/2. Functionally, catalyzes the formation of acetyl phosphate from acetate and ATP. Can also catalyze the reverse reaction. The polypeptide is Acetate kinase (Caldicellulosiruptor saccharolyticus (strain ATCC 43494 / DSM 8903 / Tp8T 6331)).